Here is a 567-residue protein sequence, read N- to C-terminus: Probable transport protein (567 aa).

The span at 1-30 (MSDRVEVNERRSDSVSEKEPARDDARKDVT) shows a compositional bias: basic and acidic residues. The segment at 1–38 (MSDRVEVNERRSDSVSEKEPARDDARKDVTDDQEDAPP) is disordered. Over 1-46 (MSDRVEVNERRSDSVSEKEPARDDARKDVTDDQEDAPPFMTANNAR) the chain is Cytoplasmic. Residues 47 to 67 (VMLVQAIGGSLNGYSIGFVGV) form a helical membrane-spanning segment. At 68–160 (YSTLFGYSTN…PSGYSSSESG (93 aa)) the chain is on the extracellular side. A helical transmembrane segment spans residues 161-181 (IFAGSMIAGCLIGSVFAGPLA). Residues 182–189 (SKIGARLS) lie on the Cytoplasmic side of the membrane. Residues 190 to 210 (FLLVGLVGVVASVMYHASCAA) traverse the membrane as a helical segment. The Extracellular segment spans residues 211–212 (DE). A helical membrane pass occupies residues 213 to 233 (FWVLIVGRFVIGLFLGVICVA). The Cytoplasmic portion of the chain corresponds to 234 to 249 (CPVYTDQNAHPKWKRT). The helical transmembrane segment at 250-270 (IGVMFQVFTTLGIFVAALMGL) threads the bilayer. Residues 271–289 (ALGQSIRFDHDGDQKVMAR) lie on the Extracellular side of the membrane. A helical transmembrane segment spans residues 290–310 (MQGLCVFSTLFSLLTVVLGIV). Residues 311-341 (TRESRAKFDGGEEGRAELNPSEYGYVEMIPR) are Cytoplasmic-facing. The helical transmembrane segment at 342–362 (LLMGCVMAGTLQLTGINAVMN) threads the bilayer. Topologically, residues 363–366 (YAPT) are extracellular. A helical transmembrane segment spans residues 367–387 (IMGSLGLAPLVGNFVVMLWNF). The Cytoplasmic portion of the chain corresponds to 388–404 (VTTLASIPLSYVFTMRH). The helical transmembrane segment at 405 to 425 (VFLFGSIFTSCMCLFMCGIPV) threads the bilayer. Residues 426–437 (YPGVSKKLEAKN) are Extracellular-facing. The helical transmembrane segment at 438-458 (GVAITGILLFILGFEVCVGPC) threads the bilayer. Residues 459–480 (YYVLTQDMFPPSFRPRGASFTQ) lie on the Cytoplasmic side of the membrane. A helical membrane pass occupies residues 481–501 (VAQFIFNLIINVCYPIATESI). The Extracellular segment spans residues 502-514 (SGGPSGNQDKGQA). Residues 515–535 (VAFIFFGGLGLICFVIQVFFL) form a helical membrane-spanning segment. Topologically, residues 536–567 (HPWDEERDGKKVVAPAIGKKELSEESIGNRAE) are cytoplasmic.

Belongs to the major facilitator superfamily. Sugar transporter (TC 2.A.1.1) family.

The protein resides in the membrane. Functionally, probable membrane transport protein. The protein is Probable transport protein (PRO-1) of Leishmania enriettii.